The primary structure comprises 208 residues: Uracil phosphoribosyltransferase (208 aa).

5-phospho-alpha-D-ribose 1-diphosphate is bound by residues Arg78, Arg103, and 130-138; that span reads DPMLATGGS. Residues Ile193 and 198-200 contribute to the uracil site; that span reads GDA. 5-phospho-alpha-D-ribose 1-diphosphate is bound at residue Asp199.

It belongs to the UPRTase family. The cofactor is Mg(2+).

It carries out the reaction UMP + diphosphate = 5-phospho-alpha-D-ribose 1-diphosphate + uracil. Its pathway is pyrimidine metabolism; UMP biosynthesis via salvage pathway; UMP from uracil: step 1/1. With respect to regulation, allosterically activated by GTP. In terms of biological role, catalyzes the conversion of uracil and 5-phospho-alpha-D-ribose 1-diphosphate (PRPP) to UMP and diphosphate. In Vibrio parahaemolyticus serotype O3:K6 (strain RIMD 2210633), this protein is Uracil phosphoribosyltransferase.